The sequence spans 958 residues: Coiled-coil domain-containing protein 33 (958 aa).

Residues 214 to 353 (SPEEPLIASQ…LVKPTESGKA (140 aa)) enclose the C2 domain. Positions 602–617 (SKDTVSSTMDLSTSTP) are enriched in polar residues. Residues 602-628 (SKDTVSSTMDLSTSTPREAEEEPLVPE) are disordered. Coiled coils occupy residues 632–774 (DTEM…LEDR) and 859–899 (FNLL…RLQE). A disordered region spans residues 899 to 958 (EQEKGFRHPSNSIIIEQPSALTHSMDLKQPSELEPLLPSSDSKLNKPLSPQKETANSQQT). 2 stretches are compositionally biased toward polar residues: residues 907-920 (PSNS…SALT) and 949-958 (QKETANSQQT).

In Homo sapiens (Human), this protein is Coiled-coil domain-containing protein 33 (CCDC33).